The sequence spans 332 residues: Thiamine-binding periplasmic protein (332 aa).

The first 20 residues, 1-20, serve as a signal peptide directing secretion; it reads MKLLKLTLISTALFSTAALA. Thiamine-binding positions include tryptophan 202 and 220–223; that span reads YSTS.

The protein belongs to the bacterial solute-binding protein 1 family. As to quaternary structure, the complex is composed of two ATP-binding proteins (ThiQ), two transmembrane proteins (ThiP) and a solute-binding protein (ThiB).

It localises to the periplasm. Functionally, part of the ABC transporter complex ThiBPQ involved in thiamine import. The protein is Thiamine-binding periplasmic protein (thiB) of Haemophilus influenzae (strain ATCC 51907 / DSM 11121 / KW20 / Rd).